We begin with the raw amino-acid sequence, 137 residues long: Protein MGF 110-7L (137 aa).

Positions 1–20 (MLVIILGIIGLLASSNLVSS) are cleaved as a signal peptide. Residues N69, N70, and N105 are each glycosylated (N-linked (GlcNAc...) asparagine; by host).

This sequence belongs to the asfivirus MGF 110 family.

Plays a role in virus cell tropism, and may be required for efficient virus replication in macrophages. The sequence is that of Protein MGF 110-7L from African swine fever virus (isolate Warthog/Namibia/Wart80/1980) (ASFV).